Reading from the N-terminus, the 241-residue chain is Small ribosomal subunit protein eS4 (241 aa).

An S4 RNA-binding domain is found at 43-105; sequence IPLVMVLRDI…INKTFRVLQD (63 aa).

The protein belongs to the eukaryotic ribosomal protein eS4 family.

The chain is Small ribosomal subunit protein eS4 from Methanosphaera stadtmanae (strain ATCC 43021 / DSM 3091 / JCM 11832 / MCB-3).